We begin with the raw amino-acid sequence, 297 residues long: Retroviral cyclin (297 aa).

In terms of domain architecture, Cyclin N-terminal spans 21–113 (PVYWKELLNW…KPSLLLTETM (93 aa)). The interval 21–113 (PVYWKELLNW…KPSLLLTETM (93 aa)) is transcription activation domain. The stretch at 222–270 (QINLDFAEAEQREAAERRALLEREREQQLQEARERLDDVMAVLEAEVAI) forms a coiled coil.

It belongs to the cyclin family. Interacts (via transcription activation domain) with host TAF9 in vitro. Interacts with host CDK3 and CDK8.

It is found in the host nucleus. Functionally, transforming protein which induces the development of dermal sarcomas. Induces positive and negative regulation of transcription from host and viral promoters by interacting with various cellular factors involved in protein transcription regulation. The chain is Retroviral cyclin (orfA) from Sander vitreus (Walleye).